Here is a 92-residue protein sequence, read N- to C-terminus: Small ribosomal subunit protein uS19c (92 aa).

The protein belongs to the universal ribosomal protein uS19 family.

Its subcellular location is the plastid. The protein localises to the chloroplast. Functionally, protein S19 forms a complex with S13 that binds strongly to the 16S ribosomal RNA. The chain is Small ribosomal subunit protein uS19c from Pyropia yezoensis (Susabi-nori).